The sequence spans 238 residues: ATP synthase subunit a (238 aa).

5 helical membrane passes run 15–35, 76–96, 111–131, 167–187, and 208–230; these read IFNL…FVFI, YSLF…LGLM, PTAN…LTHI, LALR…LLLL, and AFSV…VYLG.

The protein belongs to the ATPase A chain family. In terms of assembly, F-type ATPases have 2 components, CF(1) - the catalytic core - and CF(0) - the membrane proton channel. CF(1) has five subunits: alpha(3), beta(3), gamma(1), delta(1), epsilon(1). CF(0) has three main subunits: a(1), b(2) and c(9-12). The alpha and beta chains form an alternating ring which encloses part of the gamma chain. CF(1) is attached to CF(0) by a central stalk formed by the gamma and epsilon chains, while a peripheral stalk is formed by the delta and b chains.

It is found in the cell membrane. Key component of the proton channel; it plays a direct role in the translocation of protons across the membrane. The polypeptide is ATP synthase subunit a (Streptococcus pneumoniae serotype 19F (strain G54)).